A 416-amino-acid polypeptide reads, in one-letter code: Multifunctional CCA protein (416 aa).

ATP-binding residues include Gly8 and Arg11. CTP contacts are provided by Gly8 and Arg11. 2 residues coordinate Mg(2+): Asp21 and Asp23. Residues Arg91, Arg137, and Arg140 each contribute to the ATP site. CTP is bound by residues Arg91, Arg137, and Arg140. The 102-residue stretch at 228-329 (TGLHTMMVLA…IKLFDKADFW (102 aa)) folds into the HD domain.

This sequence belongs to the tRNA nucleotidyltransferase/poly(A) polymerase family. Bacterial CCA-adding enzyme type 1 subfamily. Monomer. Can also form homodimers and oligomers. It depends on Mg(2+) as a cofactor. Ni(2+) serves as cofactor.

It catalyses the reaction a tRNA precursor + 2 CTP + ATP = a tRNA with a 3' CCA end + 3 diphosphate. The catalysed reaction is a tRNA with a 3' CCA end + 2 CTP + ATP = a tRNA with a 3' CCACCA end + 3 diphosphate. Its function is as follows. Catalyzes the addition and repair of the essential 3'-terminal CCA sequence in tRNAs without using a nucleic acid template. Adds these three nucleotides in the order of C, C, and A to the tRNA nucleotide-73, using CTP and ATP as substrates and producing inorganic pyrophosphate. tRNA 3'-terminal CCA addition is required both for tRNA processing and repair. Also involved in tRNA surveillance by mediating tandem CCA addition to generate a CCACCA at the 3' terminus of unstable tRNAs. While stable tRNAs receive only 3'-terminal CCA, unstable tRNAs are marked with CCACCA and rapidly degraded. The protein is Multifunctional CCA protein of Shewanella sp. (strain MR-7).